The sequence spans 335 residues: SAM pointed domain-containing Ets transcription factor (335 aa).

A compositionally biased stretch (low complexity) spans 1–20; that stretch reads MGSASPGLSSVSPSHLLLPP. 2 disordered regions span residues 1–25 and 75–100; these read MGSASPGLSSVSPSHLLLPPDTVSR and AKAPGASSREEPPEEPEQCPVIDSQA. A PNT domain is found at 129–213; the sequence is EVLKDIETAC…AHLDIWKSAA (85 aa). The segment at residues 249–332 is a DNA-binding region (ETS); it reads IHLWQFLKEL…ISQRLVYQFV (84 aa).

It belongs to the ETS family. As to quaternary structure, interacts with the DNA-binding domain of the androgen receptor. Interacts with NKX3-1. Expressed in a very restricted set of primarily hormone-regulated epithelial tissues with particularly high expression in the prostate gland. Significantly lower expression is seen in other hormone regulated tissues such as mammary gland, salivary gland, and ovary. Expressed in prostate carcinoma cells.

It localises to the nucleus. May function as an androgen-independent transactivator of the prostate-specific antigen (PSA) promoter. Binds to 5'-GGAT-3' DNA sequences. May play a role in the regulation of the prostate gland and/or prostate cancer development. Acts as a transcriptional activator for SERPINB5 promoter. The polypeptide is SAM pointed domain-containing Ets transcription factor (SPDEF) (Homo sapiens (Human)).